Here is a 103-residue protein sequence, read N- to C-terminus: Small ribosomal subunit protein uS10 (103 aa).

The protein belongs to the universal ribosomal protein uS10 family. As to quaternary structure, part of the 30S ribosomal subunit.

Involved in the binding of tRNA to the ribosomes. This chain is Small ribosomal subunit protein uS10, found in Pseudomonas aeruginosa (strain LESB58).